The chain runs to 83 residues: uncharacterized protein (83 aa).

This is an uncharacterized protein from Rickettsia conorii (strain ATCC VR-613 / Malish 7).